A 1102-amino-acid chain; its full sequence is Ubiquitin carboxyl-terminal hydrolase 7 (1102 aa).

Residues 1–10 show a composition bias toward low complexity; the sequence is MNHQQQQQQQ. The tract at residues 1–38 is disordered; sequence MNHQQQQQQQKAGEQQLSEPEDMEMEAGDTDDPPRITQ. Residues 1 to 208 form an interaction with TSPYL5 region; that stretch reads MNHQQQQQQQ…APHGVAWDSK (208 aa). Ser-18 is modified (phosphoserine). Over residues 19–31 the composition is skewed to acidic residues; sequence EPEDMEMEAGDTD. At Ser-49 the chain carries Phosphoserine. Residues 53–208 form an interaction with p53/TP53, MDM2 and EBNA1 region; sequence NTAEEDMEDD…APHGVAWDSK (156 aa). Positions 68–195 constitute an MATH domain; sequence EATFQFTVER…DDKVTFEVFV (128 aa). Residues 70-205 form a necessary for nuclear localization region; that stretch reads TFQFTVERFS…QADAPHGVAW (136 aa). Residues 214–521 enclose the USP domain; the sequence is VGLKNQGATC…NAYMLVYIRE (308 aa). Cys-223 functions as the Nucleophile in the catalytic mechanism. His-464 (proton acceptor) is an active-site residue. The interval 622 to 801 is interaction with ICP0/VMW110; sequence LWPMQARSNG…HRVDVIFCDK (180 aa). Lys-869 carries the N6-acetyllysine; alternate modification. Lys-869 participates in a covalent cross-link: Glycyl lysine isopeptide (Lys-Gly) (interchain with G-Cter in SUMO2); alternate. A Glycyl lysine isopeptide (Lys-Gly) (interchain with G-Cter in ubiquitin); alternate cross-link involves residue Lys-869. Residue Lys-882 forms a Glycyl lysine isopeptide (Lys-Gly) (interchain with G-Cter in SUMO2) linkage. At Ser-963 the chain carries Phosphoserine. Lys-1084 and Lys-1096 each carry N6-acetyllysine.

This sequence belongs to the peptidase C19 family. As to quaternary structure, monomer. Homodimer. Part of a complex with DAXX, MDM2, RASSF1 and USP7. Part of a complex with DAXX, MDM2 and USP7. Interacts with MDM2; the interaction is independent of p53/TP53. Interacts with DAXX; the interaction is direct and independent of MDM2 and p53/TP53. Component of a complex composed of KMT2E/MLL5 (isoform 3), OGT (isoform 1) and USP7; the complex stabilizes KMT2E/MLL5, preventing KMT2E/MLL5 ubiquitination and proteasomal-mediated degradation. Interacts (via MATH domain) with KMT2E/MLL5 isoform 3. Interacts with OGT isoform 1. Interacts with FOXO4; the interaction is enhanced in presence of hydrogen peroxide and occurs independently of p53/TP53. Interacts with p53/TP53; the interaction is enhanced in response to DNA damage. Interacts with TSPYL5; this impairs interaction with p53/TP53. Interacts with PTEN; the interaction is direct. Interacts with ATXN1 and the strength of interaction is influenced by the length of the poly-Gln region in ATXN1. A weaker interaction seen with mutants having longer poly-Gln regions. Interacts with KIAA1530/UVSSA. Interacts with ABRAXAS2; the interaction is direct. Identified in a complex with TP53/p53 and ABRAXAS2. Interacts with MEX3C and antagonizes its ability to degrade mRNA. Interacts with DNMT1 and UHRF1. Interacts with FOXP3. Interacts (via MATH domain) with RNF220. Associated component of the Polycomb group (PcG) multiprotein PRC1-like complex. Interacts with EPOP. Interacts with OTUD4 and USP9X; the interaction is direct. Interacts with CRY2. Interacts with REST. Interacts with ERCC6. Part of a complex consisting of USP7, MAGEL2 and TRIM27; directly interacts with MAGEL2; directly interacts with TRIM27. (Microbial infection) Isoform 1 and isoform 2 interact with herpesvirus 1 trans-acting transcriptional protein ICP0/VMW110. Binding to ICP0/VMW110 may modulate the substrate specificity or activity of USP7 to stabilize viral proteins. In terms of assembly, (Microbial infection) Interacts with Epstein-Barr virus EBNA1; the interaction is independent and simultaneous to EBNA1 interaction with USP7 as well as necessary for PML nuclear bodies disruption by EBNA1. EBNA1, USP7 and CSNK2B form a ternary complex. EBNA1 shows a 10-fold higher affinity than p53/TP53 and can compete with it for USP7 binding. As to quaternary structure, (Microbial infection) Interacts with human cytomegalovirus proteins UL35 and UL35A; these interactions inhibit the ability of USP7 to form nuclear bodies. (Microbial infection) Interacts with herpes virus 8/HHV-8 proteins vIRF-1 and vIRF-3; these interactions may disrupt TP53 signaling pathway during viral infection by decreasing the availability of USP7 for deubiquitinating and stabilizing TP53. In terms of assembly, (Microbial infection) Interacts with herpes virus 8/HHV-8 protein vIRF-2; this interaction modulates antiviral signaling via disruption of USP7 interactions with innate immune signaling proteins TRAF3 and TRAF6 thus affecting their ubiquitination. Isoform 1: Phosphorylated. Isoform 1 is phosphorylated at positions Ser-18 and Ser-963. Isoform 2: Not phosphorylated. Post-translationally, isoform 1: Polyneddylated. Isoform 2: Not Polyneddylated. In terms of processing, isoform 1 and isoform 2: Not sumoylated. Isoform 1 and isoform 2: Polyubiquitinated by herpesvirus 1 trans-acting transcriptional protein ICP0/VMW110; leading to its subsequent proteasomal degradation. Isoform 1: Ubiquitinated at Lys-869. As to expression, expressed in neural progenitor cells (at protein level). Widely expressed. Overexpressed in prostate cancer.

Its subcellular location is the nucleus. It localises to the cytoplasm. It is found in the PML body. The protein localises to the chromosome. It catalyses the reaction Thiol-dependent hydrolysis of ester, thioester, amide, peptide and isopeptide bonds formed by the C-terminal Gly of ubiquitin (a 76-residue protein attached to proteins as an intracellular targeting signal).. Its activity is regulated as follows. Inhibited by N-ethyl-maleimide (NEM) and divalent cations. Tolerates high concentrations of NaCl but is inhibited at concentrations of 195 mM and higher. Functionally, hydrolase that deubiquitinates target proteins such as ARMC5, FOXO4, DEPTOR, KAT5, p53/TP53, MDM2, ERCC6, DNMT1, UHRF1, PTEN, KMT2E/MLL5 and DAXX. Together with DAXX, prevents MDM2 self-ubiquitination and enhances the E3 ligase activity of MDM2 towards p53/TP53, thereby promoting p53/TP53 ubiquitination and proteasomal degradation. Deubiquitinates p53/TP53, preventing degradation of p53/TP53, and enhances p53/TP53-dependent transcription regulation, cell growth repression and apoptosis. Deubiquitinates p53/TP53 and MDM2 and strongly stabilizes p53/TP53 even in the presence of excess MDM2, and also induces p53/TP53-dependent cell growth repression and apoptosis. Deubiquitination of FOXO4 in presence of hydrogen peroxide is not dependent on p53/TP53 and inhibits FOXO4-induced transcriptional activity. In association with DAXX, is involved in the deubiquitination and translocation of PTEN from the nucleus to the cytoplasm, both processes that are counteracted by PML. Deubiquitinates KMT2E/MLL5 preventing KMT2E/MLL5 proteasomal-mediated degradation. Involved in cell proliferation during early embryonic development. Involved in transcription-coupled nucleotide excision repair (TC-NER) in response to UV damage: recruited to DNA damage sites following interaction with KIAA1530/UVSSA and promotes deubiquitination of ERCC6, preventing UV-induced degradation of ERCC6. Involved in maintenance of DNA methylation via its interaction with UHRF1 and DNMT1: acts by mediating deubiquitination of UHRF1 and DNMT1, preventing their degradation and promoting DNA methylation by DNMT1. Deubiquitinates alkylation repair enzyme ALKBH3. OTUD4 recruits USP7 and USP9X to stabilize ALKBH3, thereby promoting the repair of alkylated DNA lesions. Acts as a chromatin regulator via its association with the Polycomb group (PcG) multiprotein PRC1-like complex; may act by deubiquitinating components of the PRC1-like complex. Able to mediate deubiquitination of histone H2B; it is however unsure whether this activity takes place in vivo. Exhibits a preference towards 'Lys-48'-linked ubiquitin chains. Increases regulatory T-cells (Treg) suppressive capacity by deubiquitinating and stabilizing the transcription factor FOXP3 which is crucial for Treg cell function. Plays a role in the maintenance of the circadian clock periodicity via deubiquitination and stabilization of the CRY1 and CRY2 proteins. Deubiquitinates REST, thereby stabilizing REST and promoting the maintenance of neural progenitor cells. Deubiquitinates SIRT7, inhibiting SIRT7 histone deacetylase activity and regulating gluconeogenesis. Involved in the regulation of WASH-dependent actin polymerization at the surface of endosomes and the regulation of endosomal protein recycling. It maintains optimal WASH complex activity and precise F-actin levels via deubiquitination of TRIM27 and WASHC1. Mediates the deubiquitination of phosphorylated DEPTOR, promoting its stability and leading to decreased mTORC1 signaling. (Microbial infection) Contributes to the overall stabilization and trans-activation capability of the herpesvirus 1 trans-acting transcriptional protein ICP0/VMW110 during HSV-1 infection. Its function is as follows. (Microbial infection) Upon infection with Epstein-Barr virus, the interaction with viral EBNA1 increases the association of USP7 with PML proteins, which is required for the polyubiquitylation and degradation of PML. This chain is Ubiquitin carboxyl-terminal hydrolase 7, found in Homo sapiens (Human).